Reading from the N-terminus, the 469-residue chain is DNA polymerase delta subunit 2 (469 aa).

Residue M1 is modified to N-acetylmethionine. Phosphoserine is present on S257.

It belongs to the DNA polymerase delta/II small subunit family. Component of both the DNA polymerase delta and DNA polymerase zeta complexes. Component of the tetrameric DNA polymerase delta complex (Pol-delta4), which consists of POLD1/p125, POLD2/p50, POLD3/p66/p68 and POLD4/p12, with POLD1 bearing DNA polymerase and 3' to 5' proofreading exonuclease activities. Within Pol-delta4, directly interacts with POLD1, POLD3 and POLD4. Following stress caused by DNA damaging agents or by replication stress, POLD4 is degraded and Pol-delta4 is converted into a trimeric form of the complex (Pol-delta3), which consists of POLD1, POLD2 and POLD3. Pol-delta3 is the major form occurring at S phase replication sites, as well as DNA damage sites. Also observed as a dimeric complex with POLD2 (Pol-delta2 complex). Pol-delta2 is relatively insensitive to the PCNA stimulation (2-5-fold) compared to Pol-delta4 that is stimulated by over 50-fold. Contrary to the other components of Pol-delta4, does not directly interact with PCNA. As POLD1 and POLD4, directly interacts with WRNIP1; this interaction stimulates DNA polymerase delta-mediated DNA synthesis, independently of the presence of PCNA. This stimulation may be due predominantly to an increase of initiation frequency and also to increased processivity. Directly interacts with POLDIP2 and POLDIP3. Directly interacts with KCTD13/PDIP1; in the presence of PCNA, this interaction may stimulate DNA polymerase activity. Component of the tetrameric Pol-zeta complex (Pol-zeta4), which consists of REV3L, MAD2L2, POLD2 and POLD3, with REV3L bearing DNA polymerase catalytic activity. Interacts with KCTD10.

Its subcellular location is the nucleus. In terms of biological role, accessory component of both the DNA polymerase delta complex and the DNA polymerase zeta complex. As a component of the trimeric and tetrameric DNA polymerase delta complexes (Pol-delta3 and Pol-delta4, respectively), plays a role in high fidelity genome replication, including in lagging strand synthesis, and repair. Pol-delta3 and Pol-delta4 are characterized by the absence or the presence of POLD4. They exhibit differences in catalytic activity. Most notably, Pol-delta3 shows higher proofreading activity than Pol-delta4. Although both Pol-delta3 and Pol-delta4 process Okazaki fragments in vitro, Pol-delta3 may also be better suited to fulfill this task, exhibiting near-absence of strand displacement activity compared to Pol-delta4 and stalling on encounter with the 5'-blocking oligonucleotides. Pol-delta3 idling process may avoid the formation of a gap, while maintaining a nick that can be readily ligated. Along with DNA polymerase kappa, DNA polymerase delta carries out approximately half of nucleotide excision repair (NER) synthesis following UV irradiation. Under conditions of DNA replication stress, required for the repair of broken replication forks through break-induced replication (BIR). Involved in the translesion synthesis (TLS) of templates carrying O6-methylguanine or abasic sites performed by Pol-delta4, independently of DNA polymerase zeta (REV3L) or eta (POLH). Facilitates abasic site bypass by DNA polymerase delta by promoting extension from the nucleotide inserted opposite the lesion. Also involved in TLS as a component of the DNA polymerase zeta complex. Along with POLD3, dramatically increases the efficiency and processivity of DNA synthesis of the DNA polymerase zeta complex compared to the minimal zeta complex, consisting of only REV3L and REV7. This Mus musculus (Mouse) protein is DNA polymerase delta subunit 2 (Pold2).